Here is a 1335-residue protein sequence, read N- to C-terminus: Mediator of RNA polymerase II transcription subunit 15a (1335 aa).

Disordered stretches follow at residues Met1–Pro27, Gly109–Thr172, Gln190–Pro225, Phe241–Gln389, Ile401–Asn448, Leu496–Gly525, Ser567–Gly591, and His683–Val815. Composition is skewed to polar residues over residues Thr110 to Pro158, Gln190 to Gln207, and Phe241 to Ile257. The span at Gln258 to Leu270 shows a compositional bias: low complexity. Positions His271–Asn299 are enriched in polar residues. A compositionally biased stretch (low complexity) spans Gln300–Ser314. The segment covering Met315 to Pro328 has biased composition (polar residues). Positions Gln329–Gln362 are enriched in low complexity. Polar residues predominate over residues Ala363–Met374. Over residues Ile401–Gln436 the composition is skewed to low complexity. Residues Ala437 to Asn448 are compositionally biased toward polar residues. The segment covering Ser498–Gly525 has biased composition (low complexity). Polar residues predominate over residues Ser567–Ala588. Positions Pro688–Asp712 are enriched in low complexity. Composition is skewed to polar residues over residues Asp716–Met728, Ala735–Ser749, and Ala756–Val815. Residues Gln834 to Asp882 are a coiled coil. Disordered stretches follow at residues Lys947–Leu986 and Phe1146–Ala1165. Positions Ser957 to Pro973 are enriched in low complexity. Over residues Gly1148 to Ser1160 the composition is skewed to polar residues.

The protein belongs to the plant Mediator complex subunit 15 family. Component of the Mediator complex.

Its subcellular location is the nucleus. Functionally, component of the Mediator complex, a coactivator involved in the regulated transcription of nearly all RNA polymerase II-dependent genes. Mediator functions as a bridge to convey information from gene-specific regulatory proteins to the basal RNA polymerase II transcription machinery. The Mediator complex, having a compact conformation in its free form, is recruited to promoters by direct interactions with regulatory proteins and serves for the assembly of a functional preinitiation complex with RNA polymerase II and the general transcription factors. The protein is Mediator of RNA polymerase II transcription subunit 15a (MED15A) of Arabidopsis thaliana (Mouse-ear cress).